The chain runs to 773 residues: MPKVMKDVVHPLGGEEPSMARAVVRSVGGFTLGLSLATAYGLLELLVEGHSPWGCLVGTLTLAAFLSLGMGFSRQVRATVLLLLPQAFSRQGRTLLLVAAFGLVLQGPCANTLRNFTRASEAVACGAELALNQTAEVLQRAKQPLVSALNKIKAIARKTKEVADRVRKFFRSIMDGVKHIARALRNVWQWLLHIGDVCNSELGNPYLKCARVFDDAKDSCMMVIPQAYHLCYVLMPFKLALCGLASLVQVFCVIPKYIQPFLRQTIGTPVIQLLNRVRQEFEFNMTATHHFSVDLNASRSLSQVAMDLHEAVSMKLHRVREALALMGFTTPLLLVLLYLQALFYRYCYLNWDHYDNIYITSRFLRMEAVRSTAGLPTVLPLSAHEARRYIPPGSIFLSQWEKFFYILETFNLIRHLLLVLFLVFLDYAVFWVLDLARHQLQGEIVARSPVLVSLTVEGTGYAGNIYRDLVSAFDVLQQGNISILSRRCLLRPSEPDSTGYIVIGVMYGLCFFITLFGSYVSRLRRVICASYYPSREQERISYLYNVLLSRRTNLLAALHRSVRRRAADQGHRSAFLVLASRCPCLGPFVSHFWLHQAYCLGCGQPQDEGDMENTVSCSTPGCQGLYCLTCFRLLDNTCSVCASPLSYQGDLDLELDSSDEEGPQLWLAAAQRKDPEQAWLLQQQLQEVLGRSLSMESTSESSDLDEEKGPQQRKHGQQPLPEAHQPVSILTSPEPHRPPETSSATKGAPTPASEPSVPLSPPSLPDPSHPPPK.

The Cytoplasmic portion of the chain corresponds to 1–26; the sequence is MPKVMKDVVHPLGGEEPSMARAVVRS. The helical transmembrane segment at 27 to 47 threads the bilayer; it reads VGGFTLGLSLATAYGLLELLV. The Extracellular portion of the chain corresponds to 48 to 51; that stretch reads EGHS. Residues 52 to 72 form a helical membrane-spanning segment; that stretch reads PWGCLVGTLTLAAFLSLGMGF. The Cytoplasmic segment spans residues 73–233; sequence SRQVRATVLL…IPQAYHLCYV (161 aa). Residues 234–254 form a helical membrane-spanning segment; it reads LMPFKLALCGLASLVQVFCVI. The Extracellular portion of the chain corresponds to 255 to 322; the sequence is PKYIQPFLRQ…SMKLHRVREA (68 aa). N-linked (GlcNAc...) asparagine glycosylation is found at Asn284 and Asn296. Residues 323-343 traverse the membrane as a helical segment; that stretch reads LALMGFTTPLLLVLLYLQALF. Over 344-415 the chain is Cytoplasmic; it reads YRYCYLNWDH…ILETFNLIRH (72 aa). A helical membrane pass occupies residues 416-436; the sequence is LLLVLFLVFLDYAVFWVLDLA. Residues 437–499 lie on the Extracellular side of the membrane; the sequence is RHQLQGEIVA…LRPSEPDSTG (63 aa). Asn480 carries an N-linked (GlcNAc...) asparagine glycan. A helical transmembrane segment spans residues 500–520; it reads YIVIGVMYGLCFFITLFGSYV. Topologically, residues 521–773 are cytoplasmic; that stretch reads SRLRRVICAS…LPDPSHPPPK (253 aa). Residues 692-701 are compositionally biased toward low complexity; that stretch reads SLSMESTSES. The segment at 692–773 is disordered; the sequence is SLSMESTSES…LPDPSHPPPK (82 aa). Residues 758–773 show a composition bias toward pro residues; sequence PLSPPSLPDPSHPPPK.

Interacts with DCST1.

Its subcellular location is the cytoplasmic vesicle. It localises to the secretory vesicle. The protein resides in the acrosome membrane. In terms of biological role, essential sperm cell-surface protein required for sperm-egg fusion and fertilization. The sequence is that of DC-STAMP domain-containing protein 2 (DCST2) from Homo sapiens (Human).